Reading from the N-terminus, the 119-residue chain is Amicyanin-alpha (119 aa).

The first 20 residues, 1–20 (MRALAFAAALAAFSATAALA), serve as a signal peptide directing secretion. In terms of domain architecture, Plastocyanin-like spans 21–119 (AGALEAVQEA…PFMKGKVVVE (99 aa)). Cu cation is bound by residues His67, Cys106, His109, and Met112.

Cu cation serves as cofactor.

It localises to the periplasm. The protein operates within one-carbon metabolism; methylamine degradation. In terms of biological role, primary acceptor of electrons from methylamine dehydrogenase. Passes those electrons on either a soluble cytochrome c or to pseudoazurin. The protein is Amicyanin-alpha (mauC) of Methylorubrum extorquens (strain ATCC 14718 / DSM 1338 / JCM 2805 / NCIMB 9133 / AM1) (Methylobacterium extorquens).